Consider the following 496-residue polypeptide: Fascin (496 aa).

Belongs to the fascin family.

The protein resides in the cytoplasm. It is found in the cytoskeleton. Functionally, acts as an actin bundling protein. The sequence is that of Fascin from Strongylocentrotus purpuratus (Purple sea urchin).